Consider the following 153-residue polypeptide: MAGEVYLLWLLPLLQGLASYGAELSSEACRELGFSSNLLCSSCELLGQFSLNQLDLPCRQCCQEEAQLENRKLYPGAILEVCGUKLGRFPQVQAFVRSDKPKLFRGLQIKYVRGSDPVLKLLDDNGNIAEELSILKWNTDSVEEFLSEKLERI.

An N-terminal signal peptide occupies residues 1-19 (MAGEVYLLWLLPLLQGLAS). Residue U84 is a non-standard amino acid, selenocysteine.

This sequence belongs to the selenoprotein M/F family. As to expression, higher levels in polster, prechordal plate, axis, otic vesicle and somites. Lower levels in fin buds.

The protein localises to the endoplasmic reticulum lumen. Its function is as follows. May be involved in redox reactions associated with the formation of disulfide bonds. May contribute to the quality control of protein folding in the endoplasmic reticulum. This Danio rerio (Zebrafish) protein is Selenoprotein F.